Reading from the N-terminus, the 493-residue chain is Glycerol kinase (493 aa).

Residue Thr12 participates in ADP binding. 3 residues coordinate ATP: Thr12, Thr13, and Ser14. Residue Thr12 participates in sn-glycerol 3-phosphate binding. Arg16 is a binding site for ADP. Sn-glycerol 3-phosphate-binding residues include Arg82, Glu83, Tyr132, and Asp239. The glycerol site is built by Arg82, Glu83, Tyr132, Asp239, and Gln240. Residues Thr261 and Gly303 each contribute to the ADP site. 4 residues coordinate ATP: Thr261, Gly303, Gln307, and Gly402. ADP contacts are provided by Gly402 and Asn406.

The protein belongs to the FGGY kinase family.

It catalyses the reaction glycerol + ATP = sn-glycerol 3-phosphate + ADP + H(+). It functions in the pathway polyol metabolism; glycerol degradation via glycerol kinase pathway; sn-glycerol 3-phosphate from glycerol: step 1/1. Key enzyme in the regulation of glycerol uptake and metabolism. Catalyzes the phosphorylation of glycerol to yield sn-glycerol 3-phosphate. The protein is Glycerol kinase of Thermococcus onnurineus (strain NA1).